The primary structure comprises 688 residues: Zinc finger and BTB domain-containing protein 48 (688 aa).

The BTB domain occupies C26 to S89. The tract at residues S119–S140 is disordered. K143 participates in a covalent cross-link: Glycyl lysine isopeptide (Lys-Gly) (interchain with G-Cter in SUMO2). The segment at P161–K192 is disordered. S169, S171, and S179 each carry phosphoserine. The segment covering H170–P186 has biased composition (polar residues). K263 participates in a covalent cross-link: Glycyl lysine isopeptide (Lys-Gly) (interchain with G-Cter in SUMO2). The C2H2-type 1 zinc finger occupies V291–H313. Positions 293, 296, 309, 313, 321, 324, 337, 342, 352, 355, 368, 372, 380, 383, 396, and 401 each coordinate Zn(2+). A CCHC-type zinc finger spans residues F319–N344. 9 C2H2-type zinc fingers span residues F350–H372, Y378–H401, H407–H430, F436–H459, H465–H487, F493–H515, F521–H544, H550–H572, and F578–H600. C552, C555, H568, C580, C583, H596, and H600 together coordinate Zn(2+).

The protein belongs to the krueppel C2H2-type zinc-finger protein family. In terms of assembly, interacts with EP300. In terms of tissue distribution, detected in adrenal gland and neuroblastoma.

Its subcellular location is the nucleus. It localises to the chromosome. The protein resides in the telomere. Functionally, plays a critical role in transcriptional regulation and chromatin remodeling. Acts as a regulator of telomere length. Directly binds the telomeric double-stranded 5'-TTAGGG-3' repeat. Preferentially binds to telomeres that have a low concentration of shelterin complex and acts as a regulator of telomere length by initiating telomere trimming, a process that prevents the accumulation of aberrantly long telomeres. Also acts as a transcription regulator that binds to promoter regions. Regulates expression of a small subset of genes, including MTFP1. Acts as a negative regulator of cell proliferation by specifically activating expression of ARF, a tumor suppressor isoform of CDKN2A. Acts as a transcription regulator of CIITA, the major factor regulating MHC class II gene expression. In addition, regulates cellular m6A/m6Am methylation on RNA by facilitating the recruitment of the RNA demethylase, FTO, to target mRNAs. In Homo sapiens (Human), this protein is Zinc finger and BTB domain-containing protein 48.